The primary structure comprises 198 residues: Transcriptional regulator GfcR (198 aa).

It belongs to the purine/pyrimidine phosphoribosyltransferase family. GfcR subfamily.

The chain is Transcriptional regulator GfcR from Thermoplasma acidophilum (strain ATCC 25905 / DSM 1728 / JCM 9062 / NBRC 15155 / AMRC-C165).